The following is a 130-amino-acid chain: Con-Ins M1 (130 aa).

An N-terminal signal peptide occupies residues 1 to 21; it reads MTTSSYFLLVALGLLLYVCQS. Intrachain disulfides connect Cys-29-Cys-107, Cys-41-Cys-110, Cys-53-Cys-123, and Cys-109-Cys-114. Position 34 is a 4-hydroxyproline; partial (Pro-34). Positions 59-92 are cleaved as a propeptide — c peptide; sequence AHGGTNDARATTGRALSLSKRRGFLSMLKRRGKR. 4-carboxyglutamate; partial is present on Glu-118. Ser-129 is subject to Serine amide.

This sequence belongs to the insulin family. Heterodimer of A and B chains; disulfide-linked. As to expression, expressed by the venom gland.

Its subcellular location is the secreted. Functionally, this venom insulin facilitates prey capture by rapidly inducing hypoglycemic shock. Intraperitoneal injection of this peptide into zebrafish lowers blood glucose with the same potency than human insulin. In vivo, when applied to water, this peptide reduces overall locomotor activity of zebrafish larvae, observed as a significant decrease in the percentage of time spent swimming and movement frequency. This chain is Con-Ins M1, found in Conus marmoreus (Marble cone).